The following is a 338-amino-acid chain: Lipoate-protein ligase A (338 aa).

Residues 29–216 (PATQRVLFLW…AFFSHYGERV (188 aa)) enclose the BPL/LPL catalytic domain. ATP is bound by residues R71, 76-79 (GAVF), and K134. (R)-lipoate is bound at residue K134.

The protein belongs to the LplA family. In terms of assembly, monomer.

The protein resides in the cytoplasm. It carries out the reaction L-lysyl-[lipoyl-carrier protein] + (R)-lipoate + ATP = N(6)-[(R)-lipoyl]-L-lysyl-[lipoyl-carrier protein] + AMP + diphosphate + H(+). It participates in protein modification; protein lipoylation via exogenous pathway; protein N(6)-(lipoyl)lysine from lipoate: step 1/2. The protein operates within protein modification; protein lipoylation via exogenous pathway; protein N(6)-(lipoyl)lysine from lipoate: step 2/2. Its function is as follows. Catalyzes both the ATP-dependent activation of exogenously supplied lipoate to lipoyl-AMP and the transfer of the activated lipoyl onto the lipoyl domains of lipoate-dependent enzymes. This Klebsiella pneumoniae subsp. pneumoniae (strain ATCC 700721 / MGH 78578) protein is Lipoate-protein ligase A.